A 178-amino-acid polypeptide reads, in one-letter code: Large ribosomal subunit protein uL6 (178 aa).

Belongs to the universal ribosomal protein uL6 family. Part of the 50S ribosomal subunit.

In terms of biological role, this protein binds to the 23S rRNA, and is important in its secondary structure. It is located near the subunit interface in the base of the L7/L12 stalk, and near the tRNA binding site of the peptidyltransferase center. The sequence is that of Large ribosomal subunit protein uL6 from Francisella philomiragia subsp. philomiragia (strain ATCC 25017 / CCUG 19701 / FSC 153 / O#319-036).